Reading from the N-terminus, the 264-residue chain is Glutamate racemase (264 aa).

Residues 10–11 (DS) and 42–43 (YG) each bind substrate. The active-site Proton donor/acceptor is the C73. 74–75 (NT) contacts substrate. The Proton donor/acceptor role is filled by C183. Residue 184 to 185 (TH) participates in substrate binding.

This sequence belongs to the aspartate/glutamate racemases family.

It carries out the reaction L-glutamate = D-glutamate. It participates in cell wall biogenesis; peptidoglycan biosynthesis. Its function is as follows. Provides the (R)-glutamate required for cell wall biosynthesis. This chain is Glutamate racemase, found in Streptococcus equi subsp. zooepidemicus (strain H70).